A 208-amino-acid polypeptide reads, in one-letter code: MKLQVLDIKGNEIKEIALNDYVWGIEPHQQAIYDTVISQQAALRQGTKKVKTRAEVSGGGRKPWKQKGTGRARQGSIRAPQWKGGGVTFGPTPDINYKKSVNKKVRALAFRSVLSLKVKENNLVIVDKFEFAKPSTKEMVVVMKNLKIDDQKTLIVTKEKEELVVKSSNNITGVKTISANQLNVFDLLNATKLLITEEAAIAVEEVYA.

The interval 50-83 (VKTRAEVSGGGRKPWKQKGTGRARQGSIRAPQWK) is disordered.

The protein belongs to the universal ribosomal protein uL4 family. In terms of assembly, part of the 50S ribosomal subunit.

Its function is as follows. One of the primary rRNA binding proteins, this protein initially binds near the 5'-end of the 23S rRNA. It is important during the early stages of 50S assembly. It makes multiple contacts with different domains of the 23S rRNA in the assembled 50S subunit and ribosome. Forms part of the polypeptide exit tunnel. The sequence is that of Large ribosomal subunit protein uL4 from Mycoplasma mycoides subsp. mycoides SC (strain CCUG 32753 / NCTC 10114 / PG1).